Reading from the N-terminus, the 432-residue chain is Luc7-like protein 3 (432 aa).

The residue at position 1 (Met1) is an N-acetylmethionine. A phosphoserine mark is found at Ser3, Ser110, and Ser115. Residues 124–181 (KNEEKIQVLTDKIDVLLQQIEELGSEGKVEEAQGMMKLVEQLKEERELLRSTTSTIES) adopt a coiled-coil conformation. At Lys231 the chain carries N6-acetyllysine. Residues 234–287 (LRKRTEEPDRDERLKKEKQEREEREKEREREREERERKRRREEEEREKERARDR) show a composition bias toward basic and acidic residues. The segment at 234 to 432 (LRKRTEEPDR…IKSEGDTQSN (199 aa)) is disordered. The span at 288–301 (ERRKRSRSRSRHSS) shows a compositional bias: basic residues. Basic and acidic residues predominate over residues 302–311 (RTSDRRCSRS). Basic residues predominate over residues 312–367 (RDHKRSRSRDRRRSRSRDRRRSRSHDRSERKHRSRSRDRRRSKSRDRKSYKHRSKS). The segment covering 368-414 (RDREQDRKSKEKEKKGSDDKKSSVKSSSREKQSEDTNPESKESDTKN) has biased composition (basic and acidic residues). Ser420 is subject to Phosphoserine. Residues 421-432 (EDIKSEGDTQSN) are compositionally biased toward basic and acidic residues. Lys424 is covalently cross-linked (Glycyl lysine isopeptide (Lys-Gly) (interchain with G-Cter in SUMO1); alternate). Residue Lys424 forms a Glycyl lysine isopeptide (Lys-Gly) (interchain with G-Cter in SUMO2); alternate linkage. 2 positions are modified to phosphoserine: Ser425 and Ser431.

The protein belongs to the Luc7 family. As to quaternary structure, may interact with SFRS1 and form homodimers. Interacts with JMJD6. Interacts with RBM25. Interacts with RSRC1 (via Arg/Ser-rich domain). Interacts with RRP1B.

Its subcellular location is the nucleus speckle. In terms of biological role, binds cAMP regulatory element DNA sequence. May play a role in RNA splicing. This Mus musculus (Mouse) protein is Luc7-like protein 3 (Luc7l3).